The sequence spans 562 residues: MNPLFGPNLFLLQQEQQGLAGPLGDPLGGDHFAGGGDLASAPLASAGPSAYSPPGPGPAPPAAMALRNDLGSNINVLKTLNLRFRCFLAKVHELERRNRLLEKQLQQALEEGKQGRRGLARRDQAVQTGFISPIRPLGLPLSSRPAAVCPPSARVLGSPSRSPAGPLASSAACHTSSSTSTSTAFSSSTRFMPGTIWSFSHARRLGPGLEPTLVQGPGLSWVHPDGVGVQIDTITPEIRALYNVLAKVKRERDEYKRRWEEEYTVRIQLQERVTELQEEAQEADACQEELAMKVEQLKAELVVFKGLMSNNLTELDTKIQEKAMKVDMDICRRIDITAKLCDLAQQRNCEDMIQMFQKKLVPSMGGRKRERKAAVEEDTSLSESDGPRQPEGAEEESTALSINEEMQRMLSQLREYDFEDDCDSLTWEETEETLLLWEDFSGYAMAAAEAQGEQEDSLEKVIKDTESLFKTREKEYQETIDQIELELATAKNDMNRHLHEYMEMCSMKRGLDVQMETCRRLITQSGDRKSPAFTAVPLSDPPPPPSETEDSDRDVSSDSSMR.

The tract at residues 65–116 (ALRNDLGSNINVLKTLNLRFRCFLAKVHELERRNRLLEKQLQQALEEGKQGR) is LMNA binding. The IF rod domain maps to 73–529 (NINVLKTLNL…RLITQSGDRK (457 aa)). Positions 85–117 (RCFLAKVHELERRNRLLEKQLQQALEEGKQGRR) form a coiled coil. Residues 154–187 (RVLGSPSRSPAGPLASSAACHTSSSTSTSTAFSS) form a disordered region. Low complexity predominate over residues 168-187 (ASSAACHTSSSTSTSTAFSS). Positions 237–301 (EIRALYNVLA…MKVEQLKAEL (65 aa)) form a coiled coil. The segment at 364–401 (MGGRKRERKAAVEEDTSLSESDGPRQPEGAEEESTALS) is disordered. The interval 453–528 (EQEDSLEKVI…RRLITQSGDR (76 aa)) is XCCR4 binding. Required for localization to the double-strand breaks (DSBs). Positions 458–504 (LEKVIKDTESLFKTREKEYQETIDQIELELATAKNDMNRHLHEYMEM) form a coiled coil. Residues 523–562 (TQSGDRKSPAFTAVPLSDPPPPPSETEDSDRDVSSDSSMR) are disordered. Residues 553–562 (RDVSSDSSMR) show a composition bias toward basic and acidic residues.

This sequence belongs to the intermediate filament family. In terms of assembly, forms a heterotetramer with XRCC4. The interaction with XRCC4 is direct, involves LIG4-free XRCC4 and leads to relocalization of IFFO1 at the double-strand break (DSB) sites. Interacts with LMNA; the interaction forms an interior nucleoskeleton and the recruitment to DNA double-strand breaks.

It is found in the nucleus. The protein resides in the nucleoplasm. Its subcellular location is the nucleus inner membrane. The protein localises to the nucleus matrix. Its function is as follows. Nuclear matrix protein involved in the immobilization of broken DNA ends and the suppression of chromosome translocation during DNA double-strand breaks (DSBs). Interacts with the nuclear lamina component LMNA, resulting in the formation of a nucleoskeleton that will relocalize to the DSB sites in a XRCC4-dependent manner and promote the immobilization of the broken ends, thereby preventing chromosome translocation. Acts as a scaffold that allows the DNA repair protein XRCC4 and LMNA to assemble into a complex at the DSB sites. This Mus musculus (Mouse) protein is Non-homologous end joining factor IFFO1.